The sequence spans 404 residues: Cysteine desulfurase IscS (404 aa).

Pyridoxal 5'-phosphate-binding positions include 75 to 76 (AT), Asn-155, Gln-183, and 203 to 205 (SSH). Lys-206 carries the N6-(pyridoxal phosphate)lysine modification. Thr-243 contributes to the pyridoxal 5'-phosphate binding site. Cys-328 acts as the Cysteine persulfide intermediate in catalysis. Cys-328 contributes to the [2Fe-2S] cluster binding site.

The protein belongs to the class-V pyridoxal-phosphate-dependent aminotransferase family. NifS/IscS subfamily. Homodimer. Forms a heterotetramer with IscU, interacts with other sulfur acceptors. The cofactor is pyridoxal 5'-phosphate.

Its subcellular location is the cytoplasm. It carries out the reaction (sulfur carrier)-H + L-cysteine = (sulfur carrier)-SH + L-alanine. It participates in cofactor biosynthesis; iron-sulfur cluster biosynthesis. Its function is as follows. Master enzyme that delivers sulfur to a number of partners involved in Fe-S cluster assembly, tRNA modification or cofactor biosynthesis. Catalyzes the removal of elemental sulfur atoms from cysteine to produce alanine. Functions as a sulfur delivery protein for Fe-S cluster synthesis onto IscU, an Fe-S scaffold assembly protein, as well as other S acceptor proteins. The polypeptide is Cysteine desulfurase IscS (Histophilus somni (strain 2336) (Haemophilus somnus)).